Consider the following 149-residue polypeptide: Calmodulin (149 aa).

Position 2 is an N-acetylalanine (Ala2). 4 consecutive EF-hand domains span residues 8–43 (EQIAEFKEAFSLFDKDGDGTITTKELGTVMRSLGQN), 44–79 (PTEAELQDMINEVDADGNGTIDFPEFLTMMARKMKD), 81–116 (DSEEEIIEAFKVFDKDGNGFISAAELRHIMTNLGEK), and 117–149 (LTDEEVDEMIREADIDGDGQINYEEFVKMMMAK). 14 residues coordinate Ca(2+): Asp21, Asp23, Asp25, Thr27, Glu32, Asp57, Asp59, Asn61, Thr63, Glu68, Asp94, Asp96, Asn98, and Glu105. An N6,N6,N6-trimethyllysine modification is found at Lys116. Asp130, Asp132, Asp134, Gln136, and Glu141 together coordinate Ca(2+).

It belongs to the calmodulin family.

Calmodulin mediates the control of a large number of enzymes, ion channels and other proteins by Ca(2+). Among the enzymes to be stimulated by the calmodulin-Ca(2+) complex are a number of protein kinases and phosphatases. In Macrocystis pyrifera (Giant kelp), this protein is Calmodulin.